Here is a 183-residue protein sequence, read N- to C-terminus: DNA-directed RNA polymerase subunit Rpo7 (183 aa).

The S1 motif domain occupies 82-164 (HEVIEGEVSQ…RLPRIALTMK (83 aa)).

It belongs to the eukaryotic RPB7/RPC8 RNA polymerase subunit family. In terms of assembly, part of the 13-subunit RNA polymerase complex. Forms a stalk with Rpo4 that extends from the main structure.

Its subcellular location is the cytoplasm. The enzyme catalyses RNA(n) + a ribonucleoside 5'-triphosphate = RNA(n+1) + diphosphate. Its function is as follows. DNA-dependent RNA polymerase (RNAP) catalyzes the transcription of DNA into RNA using the four ribonucleoside triphosphates as substrates. In terms of biological role, reconstitution experiments show this subunit is required for basic activity. The protein is DNA-directed RNA polymerase subunit Rpo7 of Sulfolobus acidocaldarius (strain ATCC 33909 / DSM 639 / JCM 8929 / NBRC 15157 / NCIMB 11770).